The following is a 423-amino-acid chain: Elongation factor 1-alpha (423 aa).

The tr-type G domain occupies 5–211; it reads KEHINLAFIG…DNLEPPEKPT (207 aa). The G1 stretch occupies residues 14 to 21; it reads GHVDHGKS. Residue 14–21 participates in GTP binding; the sequence is GHVDHGKS. Serine 21 serves as a coordination point for Mg(2+). Positions 60 to 64 are G2; that stretch reads GVTID. Residues 81–84 are G3; it reads DCPG. Residues 81–85 and 136–139 each bind GTP; these read DCPGH and NKMD. A G4 region spans residues 136 to 139; the sequence is NKMD. The tract at residues 175–177 is G5; the sequence is SAF.

The protein belongs to the TRAFAC class translation factor GTPase superfamily. Classic translation factor GTPase family. EF-Tu/EF-1A subfamily.

It localises to the cytoplasm. The enzyme catalyses GTP + H2O = GDP + phosphate + H(+). GTP hydrolase that promotes the GTP-dependent binding of aminoacyl-tRNA to the A-site of ribosomes during protein biosynthesis. The polypeptide is Elongation factor 1-alpha (Methanopyrus kandleri (strain AV19 / DSM 6324 / JCM 9639 / NBRC 100938)).